The sequence spans 111 residues: Probable 4-amino-4-deoxy-L-arabinose-phosphoundecaprenol flippase subunit ArnE (111 aa).

Transmembrane regions (helical) follow at residues 38–58 (LWLGLALICMGAAMVLWLLVL), 61–81 (LPVGIAYPMLSLNFVWVTLAA), and 89–109 (VLPRHWLGVALIISGIIILGS). Positions 40 to 109 (LGLALICMGA…IISGIIILGS (70 aa)) constitute an EamA domain.

The protein belongs to the ArnE family. Heterodimer of ArnE and ArnF.

Its subcellular location is the cell inner membrane. It participates in bacterial outer membrane biogenesis; lipopolysaccharide biosynthesis. Its function is as follows. Translocates 4-amino-4-deoxy-L-arabinose-phosphoundecaprenol (alpha-L-Ara4N-phosphoundecaprenol) from the cytoplasmic to the periplasmic side of the inner membrane. The chain is Probable 4-amino-4-deoxy-L-arabinose-phosphoundecaprenol flippase subunit ArnE from Salmonella paratyphi A (strain ATCC 9150 / SARB42).